The following is a 112-amino-acid chain: Putative pterin-4-alpha-carbinolamine dehydratase (112 aa).

This sequence belongs to the pterin-4-alpha-carbinolamine dehydratase family.

The catalysed reaction is (4aS,6R)-4a-hydroxy-L-erythro-5,6,7,8-tetrahydrobiopterin = (6R)-L-erythro-6,7-dihydrobiopterin + H2O. The sequence is that of Putative pterin-4-alpha-carbinolamine dehydratase from Hahella chejuensis (strain KCTC 2396).